A 293-amino-acid chain; its full sequence is Diaminopimelate epimerase (293 aa).

Substrate is bound by residues Asn-17, Gln-47, and Asn-67. The active-site Proton donor is the Cys-76. Residues 77–78 (GN), Asn-164, Asn-197, and 215–216 (ER) contribute to the substrate site. Cys-224 functions as the Proton acceptor in the catalytic mechanism. Position 225-226 (225-226 (GS)) interacts with substrate.

Belongs to the diaminopimelate epimerase family. Homodimer.

The protein resides in the cytoplasm. It catalyses the reaction (2S,6S)-2,6-diaminopimelate = meso-2,6-diaminopimelate. Its pathway is amino-acid biosynthesis; L-lysine biosynthesis via DAP pathway; DL-2,6-diaminopimelate from LL-2,6-diaminopimelate: step 1/1. Catalyzes the stereoinversion of LL-2,6-diaminopimelate (L,L-DAP) to meso-diaminopimelate (meso-DAP), a precursor of L-lysine and an essential component of the bacterial peptidoglycan. This chain is Diaminopimelate epimerase, found in Rhodopseudomonas palustris (strain HaA2).